Consider the following 209-residue polypeptide: Regulator of G-protein signaling 1 (209 aa).

In terms of domain architecture, RGS spans 85–200 (SLEKLLANQT…LKSDIYLNLL (116 aa)).

Interacts with GNAI1 and GNAQ. Detected in peripheral blood monocytes. Expression is relatively low in B-cells and chronic lymphocytic leukemia B-cells; however, in other types of malignant B-cell such as non-Hodgkin lymphoma and hairy cell leukemia, expression is constitutively high.

It is found in the cell membrane. The protein localises to the cytoplasm. The protein resides in the cytosol. Functionally, regulates G protein-coupled receptor signaling cascades, including signaling downstream of the N-formylpeptide chemoattractant receptors and leukotriene receptors. Inhibits B cell chemotaxis toward CXCL12. Inhibits signal transduction by increasing the GTPase activity of G protein alpha subunits thereby driving them into their inactive GDP-bound form. This Homo sapiens (Human) protein is Regulator of G-protein signaling 1 (RGS1).